Consider the following 270-residue polypeptide: Bis(5'-nucleosyl)-tetraphosphatase, symmetrical (270 aa).

This sequence belongs to the Ap4A hydrolase family.

The catalysed reaction is P(1),P(4)-bis(5'-adenosyl) tetraphosphate + H2O = 2 ADP + 2 H(+). Hydrolyzes diadenosine 5',5'''-P1,P4-tetraphosphate to yield ADP. This Actinobacillus pleuropneumoniae serotype 5b (strain L20) protein is Bis(5'-nucleosyl)-tetraphosphatase, symmetrical.